A 271-amino-acid polypeptide reads, in one-letter code: Putative hydro-lyase jk0403 (271 aa).

It belongs to the D-glutamate cyclase family.

In Corynebacterium jeikeium (strain K411), this protein is Putative hydro-lyase jk0403.